The sequence spans 267 residues: Tryptophan synthase alpha chain (267 aa).

Residues Glu49 and Asp60 each act as proton acceptor in the active site.

The protein belongs to the TrpA family. As to quaternary structure, tetramer of two alpha and two beta chains.

The enzyme catalyses (1S,2R)-1-C-(indol-3-yl)glycerol 3-phosphate + L-serine = D-glyceraldehyde 3-phosphate + L-tryptophan + H2O. It functions in the pathway amino-acid biosynthesis; L-tryptophan biosynthesis; L-tryptophan from chorismate: step 5/5. The alpha subunit is responsible for the aldol cleavage of indoleglycerol phosphate to indole and glyceraldehyde 3-phosphate. This chain is Tryptophan synthase alpha chain, found in Pelobacter propionicus (strain DSM 2379 / NBRC 103807 / OttBd1).